Here is a 677-residue protein sequence, read N- to C-terminus: Transketolase 1 (677 aa).

Histidine 27 contributes to the substrate binding site. Thiamine diphosphate-binding positions include histidine 66 and 114–116; that span reads GPL. Residue aspartate 155 participates in Mg(2+) binding. Residues glycine 156 and asparagine 185 each contribute to the thiamine diphosphate site. Mg(2+) contacts are provided by asparagine 185 and isoleucine 187. The substrate site is built by histidine 261, arginine 356, and serine 383. Histidine 261 serves as a coordination point for thiamine diphosphate. The thiamine diphosphate site is built by glutamate 415 and phenylalanine 442. The Proton donor role is filled by glutamate 415. Substrate is bound by residues histidine 466, aspartate 474, and arginine 525.

This sequence belongs to the transketolase family. As to quaternary structure, homodimer. Mg(2+) is required as a cofactor. It depends on Ca(2+) as a cofactor. Requires Mn(2+) as cofactor. Co(2+) serves as cofactor. The cofactor is thiamine diphosphate.

The enzyme catalyses D-sedoheptulose 7-phosphate + D-glyceraldehyde 3-phosphate = aldehydo-D-ribose 5-phosphate + D-xylulose 5-phosphate. Catalyzes the transfer of a two-carbon ketol group from a ketose donor to an aldose acceptor, via a covalent intermediate with the cofactor thiamine pyrophosphate. This Candida albicans (Yeast) protein is Transketolase 1 (TKT1).